Reading from the N-terminus, the 412-residue chain is Argininosuccinate synthase (412 aa).

Residues 10-18 and Ala36 each bind ATP; that span reads AYSGGLDTS. Positions 87 and 92 each coordinate L-citrulline. Tyr87 is subject to Phosphotyrosine. Lys112 carries the post-translational modification N6-acetyllysine. Residue Tyr113 is modified to Phosphotyrosine. Residue 115-123 coordinates ATP; it reads SHGATGKGN. The L-aspartate site is built by Thr119, Asn123, and Asp124. Residue Asn123 participates in L-citrulline binding. Arg127 is a binding site for L-citrulline. Lys165 and Lys176 each carry N6-acetyllysine; by CLOCK. Phosphoserine is present on residues Ser177 and Ser180. Ser180 and Ser189 together coordinate L-citrulline. Position 219 is a phosphoserine (Ser219). Glu270 and Tyr282 together coordinate L-citrulline.

Belongs to the argininosuccinate synthase family. Type 1 subfamily. In terms of assembly, homotetramer. Interacts with NMRAL1. Interacts with CLOCK; in a circadian manner. Forms tissue-specific complexes with ASL, SLC7A1, HSP90AA1 and nitric oxide synthase NOS1, NOS2 or NOS3; the complex regulates cell-autonomous L-arginine synthesis and citrulline recycling while channeling extracellular L-arginine to nitric oxide synthesis pathway. Post-translationally, acetylated by CLOCK in a circadian manner which negatively regulates its enzyme activity. Deacetylated by histone deacetylases. Widely expressed.

It localises to the cytoplasm. Its subcellular location is the cytosol. It catalyses the reaction L-citrulline + L-aspartate + ATP = 2-(N(omega)-L-arginino)succinate + AMP + diphosphate + H(+). Its pathway is amino-acid biosynthesis; L-arginine biosynthesis; L-arginine from L-ornithine and carbamoyl phosphate: step 2/3. The protein operates within nitrogen metabolism; urea cycle; (N(omega)-L-arginino)succinate from L-aspartate and L-citrulline: step 1/1. In terms of biological role, one of the enzymes of the urea cycle, the metabolic pathway transforming neurotoxic amonia produced by protein catabolism into inocuous urea in the liver of ureotelic animals. Catalyzes the formation of arginosuccinate from aspartate, citrulline and ATP and together with ASL it is responsible for the biosynthesis of arginine in most body tissues. This Mus musculus (Mouse) protein is Argininosuccinate synthase.